Consider the following 438-residue polypeptide: Coiled-coil domain-containing protein 78 (438 aa).

Coiled coils occupy residues 74–105 and 217–246; these read HLHEQHEAEIFQLKSEILRLESRVLELELRGD and SCQGQLRQAEAENARLQLQLKKLKDEYVLR. Residues 345 to 381 form a disordered region; the sequence is FSHREDQHGGPGALLSSPKKRPGGASQGGTSEPQGLD.

This sequence belongs to the CCDC78 family. In terms of tissue distribution, expressed primarily in skeletal muscle.

Its subcellular location is the cytoplasm. It localises to the cytoskeleton. It is found in the microtubule organizing center. The protein resides in the centrosome. The protein localises to the centriole. Its subcellular location is the perinuclear region. It localises to the cell membrane. It is found in the sarcolemma. The protein resides in the sarcoplasmic reticulum. Functionally, component of the deuterosome, a structure that promotes de novo centriole amplification in multiciliated cells that can generate more than 100 centrioles. Deuterosome-mediated centriole amplification occurs in terminally differentiated multiciliated cells (G1/0) and not in S phase. Essential for centriole amplification and is required for CEP152 localization to the deuterosome. The protein is Coiled-coil domain-containing protein 78 (CCDC78) of Homo sapiens (Human).